A 315-amino-acid chain; its full sequence is L-threo-3-deoxy-hexylosonate aldolase (315 aa).

Position 50–51 (50–51 (SN)) interacts with substrate. Lys174 (schiff-base intermediate with substrate) is an active-site residue.

This sequence belongs to the DapA family.

The enzyme catalyses 2-dehydro-3-deoxy-L-galactonate = L-glyceraldehyde + pyruvate. Its pathway is carbohydrate acid metabolism. Mediates the conversion of 2-dehydro-3-deoxy-L-galactonate to pyruvate and L-glyceraldehyde in D-galacturonate catabolic process. The chain is L-threo-3-deoxy-hexylosonate aldolase (lga1) from Hypocrea jecorina (Trichoderma reesei).